The following is a 115-amino-acid chain: MKGWLFLVIAIVGEVIATSALKSSEGFTKLAPSAVVIIGYGIAFYFLSLVLKSIPVGVAYAVWSGLGVVIITAIAWLLHGQKLDAWGFVGMGLIIAAFLLARSPSWKSLRRPTPW.

4 helical membrane-spanning segments follow: residues 4–21 (WLFL…TSAL), 30–47 (LAPS…FYFL), 58–79 (VAYA…WLLH), and 85–104 (AWGF…ARSP).

This sequence belongs to the drug/metabolite transporter (DMT) superfamily. Small multidrug resistance (SMR) (TC 2.A.7.1) family.

The protein localises to the cell membrane. Its function is as follows. One of the determinants for resistance to ethidium bromide and quaternary ammonium compounds. This chain is Putative ethidium bromide resistance protein (ebr), found in Escherichia coli.